We begin with the raw amino-acid sequence, 435 residues long: MPMDIIKGNLDGISKPASSSRSRPGSRSSNGSLEVLTPEPGSVKIDMVNKLNSGQEGHTSNSGVEERRNSNDAKWADDSKTKPAKESSDEDPDMPQPQATPEHSDDPKLEETNAVLQNAIRKMHRLDKLLAKKQCREKEVKKQGLEMRVKLWEELKSAKNTEDLENDEELGNTKKFLCLTSESAGKAAAEALHCEFEDALFSVFHTQIPPETYENLMEKDFTCDVEKNEPLIITEKQPFSNTEAIEPRSEDSQGFIRQNAEHSQDFIKRNIELAKHSRSPVVMVEGEKKRLDELLQGLDDADSGLSSAEGDQCGWLVPGEGYTLAATESQQLAEIDIKLQELSVDSPTIFSLESQSHKGDMECDANEERNTEPTPGEKILRDRKEQRDRESRLRAIDGKLKELSEQVEECPMITPSKRNERITWRWLLAKILEPE.

Disordered stretches follow at residues 1–109 (MPMD…DPKL) and 354–393 (SQSH…ESRL). Over residues 18-32 (SSSRSRPGSRSSNGS) the composition is skewed to low complexity. Polar residues predominate over residues 50–63 (KLNSGQEGHTSNSG). Positions 64–87 (VEERRNSNDAKWADDSKTKPAKES) are enriched in basic and acidic residues. 2 positions are modified to phosphoserine: Ser87 and Ser88. The stretch at 108-154 (KLEETNAVLQNAIRKMHRLDKLLAKKQCREKEVKKQGLEMRVKLWEE) forms a coiled coil. Basic and acidic residues-rich tracts occupy residues 355-371 (QSHK…ERNT) and 378-393 (KILR…ESRL).

This sequence belongs to the FSIP1 family. In terms of assembly, may interact with AKAP4. As to expression, detected in male germ cells and testis.

The protein is Fibrous sheath-interacting protein 1 (Fsip1) of Mus musculus (Mouse).